A 526-amino-acid chain; its full sequence is Peptide chain release factor 3 (526 aa).

In terms of domain architecture, tr-type G spans 9–277 (DKRRTFAIIS…GIVEWAPKPL (269 aa)). GTP-binding positions include 18-25 (SHPDAGKT), 86-90 (DTPGH), and 140-143 (NKLD).

The protein belongs to the TRAFAC class translation factor GTPase superfamily. Classic translation factor GTPase family. PrfC subfamily.

It is found in the cytoplasm. In terms of biological role, increases the formation of ribosomal termination complexes and stimulates activities of RF-1 and RF-2. It binds guanine nucleotides and has strong preference for UGA stop codons. It may interact directly with the ribosome. The stimulation of RF-1 and RF-2 is significantly reduced by GTP and GDP, but not by GMP. The sequence is that of Peptide chain release factor 3 from Shewanella sp. (strain ANA-3).